Here is an 83-residue protein sequence, read N- to C-terminus: Short neurotoxin D (83 aa).

The signal sequence occupies residues 1 to 21; sequence MKTLLLTLVVVTMVCLDLGYT. Cystine bridges form between cysteine 24/cysteine 45, cysteine 38/cysteine 62, cysteine 64/cysteine 75, and cysteine 76/cysteine 81.

The protein belongs to the three-finger toxin family. Short-chain subfamily. Type I alpha-neurotoxin sub-subfamily. Expressed by the venom gland.

The protein localises to the secreted. Its function is as follows. Binds to muscle nicotinic acetylcholine receptor (nAChR) and inhibit acetylcholine from binding to the receptor, thereby impairing neuromuscular transmission. This Laticauda colubrina (Yellow-lipped sea krait) protein is Short neurotoxin D.